The sequence spans 1553 residues: DNA topoisomerase 2-alpha (1553 aa).

The disordered stretch occupies residues 1-25 (MELLDSPAPLRPLHDNPRLPKADGA). Over residues 12-25 (PLHDNPRLPKADGA) the composition is skewed to basic and acidic residues. Residues Asn92, Asn121, 149-151 (SSN), and 162-169 (GRNGYGAK) each bind ATP. An interaction with DNA region spans residues 343–345 (KKK). 377–379 (QTK) contributes to the ATP binding site. The Toprim domain maps to 456 to 573 (CTLILTEGDS…SLLRHNFLEE (118 aa)). Mg(2+) is bound by residues Glu462, Asp542, and Asp544. A Topo IIA-type catalytic domain is found at 716–1163 (IPSLVDGLKP…SPSDLWKEDL (448 aa)). Residue Tyr806 is the O-(5'-phospho-DNA)-tyrosine intermediate of the active site. Residues 991 to 1000 (KLQTNLTCNS) are interaction with DNA. 2 disordered regions span residues 1095-1114 (QNKE…AATG) and 1186-1553 (TGKP…DDMF). The span at 1098–1107 (EEEEGDESGE) shows a compositional bias: acidic residues. Positions 1242-1262 (SEKNESDEKQEGNSSGDKEPS) are enriched in basic and acidic residues. Composition is skewed to acidic residues over residues 1300–1310 (SESDSESDDFE) and 1334–1349 (SDAD…EYQE). The span at 1371 to 1385 (VPKEKKGKAPKEKPL) shows a compositional bias: basic and acidic residues. The segment covering 1413–1432 (PRAQAVPKKPAAAKKGSTAK) has biased composition (low complexity). Positions 1444–1454 (KKKAAPKAPRR) are enriched in basic residues. The span at 1517–1532 (SIDLTADSPAAAAPRT) shows a compositional bias: low complexity.

This sequence belongs to the type II topoisomerase family. Homodimer. It depends on Mg(2+) as a cofactor. Mn(2+) is required as a cofactor. The cofactor is Ca(2+).

It is found in the cytoplasm. Its subcellular location is the nucleus. The protein localises to the nucleoplasm. The protein resides in the nucleolus. The enzyme catalyses ATP-dependent breakage, passage and rejoining of double-stranded DNA.. Its function is as follows. Key decatenating enzyme that alters DNA topology by binding to two double-stranded DNA molecules, generating a double-stranded break in one of the strands, passing the intact strand through the broken strand, and religating the broken strand. May play a role in the regulation of circadian rhythm. This Gallus gallus (Chicken) protein is DNA topoisomerase 2-alpha (TOP2A).